A 289-amino-acid chain; its full sequence is tRNA pseudouridine synthase B (289 aa).

D38 serves as the catalytic Nucleophile.

Belongs to the pseudouridine synthase TruB family. Type 1 subfamily.

The enzyme catalyses uridine(55) in tRNA = pseudouridine(55) in tRNA. Its function is as follows. Responsible for synthesis of pseudouridine from uracil-55 in the psi GC loop of transfer RNAs. This chain is tRNA pseudouridine synthase B, found in Clostridium novyi (strain NT).